Here is a 614-residue protein sequence, read N- to C-terminus: Fimbrin (614 aa).

2 consecutive EF-hand domains span residues 16 to 50 (EEIL…DSKK) and 51 to 86 (GSYD…LKKG). Ca(2+)-binding residues include Asp29, Asp31, Tyr35, Thr40, Asp66, Ser68, Arg70, and Asp75. 2 actin-binding regions span residues 98–368 (TIKG…GLEP) and 369–614 (LNEE…LMAV). Calponin-homology (CH) domains lie at 112-233 (EEER…RRGL), 261-364 (LPPE…NTHP), 385-495 (EREA…RMNI), and 508-614 (TLSD…LMAV).

It localises to the cytoplasm. The protein resides in the cytoskeleton. It is found in the actin patch. Binds to actin, and functionally associates with actin structures involved in the development and maintenance of cell polarity. Plays a role in cytokinesis. Plays important roles in mating and in spore formation. The chain is Fimbrin (fim1) from Schizosaccharomyces pombe (strain 972 / ATCC 24843) (Fission yeast).